The sequence spans 177 residues: tRNA (cytidine(56)-2'-O)-methyltransferase (177 aa).

S-adenosyl-L-methionine-binding positions include leucine 83 and glycine 108 to valine 112.

This sequence belongs to the aTrm56 family. Homodimer.

The protein localises to the cytoplasm. The catalysed reaction is cytidine(56) in tRNA + S-adenosyl-L-methionine = 2'-O-methylcytidine(56) in tRNA + S-adenosyl-L-homocysteine + H(+). In terms of biological role, specifically catalyzes the AdoMet-dependent 2'-O-ribose methylation of cytidine at position 56 in tRNAs. The sequence is that of tRNA (cytidine(56)-2'-O)-methyltransferase from Nitrosopumilus maritimus (strain SCM1).